We begin with the raw amino-acid sequence, 366 residues long: Cobalt-precorrin-5B C(1)-methyltransferase (366 aa).

Belongs to the CbiD family.

It catalyses the reaction Co-precorrin-5B + S-adenosyl-L-methionine = Co-precorrin-6A + S-adenosyl-L-homocysteine. It functions in the pathway cofactor biosynthesis; adenosylcobalamin biosynthesis; cob(II)yrinate a,c-diamide from sirohydrochlorin (anaerobic route): step 6/10. Functionally, catalyzes the methylation of C-1 in cobalt-precorrin-5B to form cobalt-precorrin-6A. The sequence is that of Cobalt-precorrin-5B C(1)-methyltransferase from Pseudomonas paraeruginosa (strain DSM 24068 / PA7) (Pseudomonas aeruginosa (strain PA7)).